We begin with the raw amino-acid sequence, 624 residues long: tRNA uridine 5-carboxymethylaminomethyl modification enzyme MnmG (624 aa).

FAD-binding positions include 13-18 (GAGHAG), valine 125, and serine 180. 272–286 (GPRYCPSIEDKVVKF) provides a ligand contact to NAD(+). An FAD-binding site is contributed by glutamine 369.

The protein belongs to the MnmG family. Homodimer. Heterotetramer of two MnmE and two MnmG subunits. FAD is required as a cofactor.

The protein resides in the cytoplasm. NAD-binding protein involved in the addition of a carboxymethylaminomethyl (cmnm) group at the wobble position (U34) of certain tRNAs, forming tRNA-cmnm(5)s(2)U34. The chain is tRNA uridine 5-carboxymethylaminomethyl modification enzyme MnmG from Thermodesulfovibrio yellowstonii (strain ATCC 51303 / DSM 11347 / YP87).